The chain runs to 352 residues: Glycogen synthase kinase 3 (352 aa).

The Protein kinase domain maps to 20 to 310 (YTVERVAGQG…PLDALCHPFF (291 aa)). Residues 26-34 (AGQGTFGTV) and Lys-49 each bind ATP. Asp-152 acts as the Proton acceptor in catalysis.

It belongs to the protein kinase superfamily. CMGC Ser/Thr protein kinase family. GSK-3 subfamily. As to quaternary structure, inhibited by cyclin kinase 2 (CDK2) inhibitors, including GW8510.

It carries out the reaction L-seryl-[tau protein] + ATP = O-phospho-L-seryl-[tau protein] + ADP + H(+). The catalysed reaction is L-threonyl-[tau protein] + ATP = O-phospho-L-threonyl-[tau protein] + ADP + H(+). In Trypanosoma brucei brucei (strain 927/4 GUTat10.1), this protein is Glycogen synthase kinase 3.